Reading from the N-terminus, the 79-residue chain is Sulfur carrier protein TusA (79 aa).

The active-site Cysteine persulfide intermediate is the cysteine 15.

The protein belongs to the sulfur carrier protein TusA family. Interacts with IscS.

It localises to the cytoplasm. Its pathway is tRNA modification. Sulfur carrier protein involved in sulfur trafficking in the cell. Part of a sulfur-relay system required for 2-thiolation during synthesis of 2-thiouridine of the modified wobble base 5-methylaminomethyl-2-thiouridine (mnm(5)s(2)U) in tRNA. Interacts with IscS and stimulates its cysteine desulfurase activity. Accepts an activated sulfur from IscS, which is then transferred to TusD, and thus determines the direction of sulfur flow from IscS to 2-thiouridine formation. Also appears to be involved in sulfur transfer for the biosynthesis of molybdopterin. This chain is Sulfur carrier protein TusA, found in Buchnera aphidicola subsp. Baizongia pistaciae (strain Bp).